The chain runs to 972 residues: Optomotor-blind protein (972 aa).

Disordered stretches follow at residues 44–248 (SLLT…YFPA), 263–286 (PGLY…HAHH), 508–563 (AKGF…HPHA), 645–676 (ADVE…TGSP), 805–889 (AVTP…PSEL), and 918–972 (EEAA…GTDQ). Composition is skewed to low complexity over residues 49-80 (GSNN…NTNN) and 97-142 (SNHS…NNTS). A compositionally biased stretch (pro residues) spans 155–176 (PPSPAGTPPPTIVGLPPIPPPN). 2 stretches are compositionally biased toward low complexity: residues 177–193 (NNSS…AAAH) and 201–212 (AHHSPSTGAAAP). The span at 213–225 (PAGPTGLPPPTPP) shows a compositional bias: pro residues. Over residues 226–237 (HHLQQQQQQQQH) the composition is skewed to low complexity. The segment covering 274-286 (PPHHPGAHPHAHH) has biased composition (basic residues). Residues 332 to 513 (LEGKDLWEKF…NNPFAKGFRD (182 aa)) constitute a DNA-binding region (T-box). Gly residues predominate over residues 818-831 (PPGGGGGGLGGGVV). A compositionally biased stretch (low complexity) spans 835 to 851 (PRSLSSSPRPRPASHSP). Phosphoserine is present on Ser887. The segment covering 952–963 (HPHHQTHLHSHH) has biased composition (basic residues).

In third-instar larvae, expressed in the brain region that will develop into optic lobes and more weakly in the thoracic part of the ventral ganglion.

It is found in the nucleus. Functionally, essential protein that may function as a transcription regulator. Vital for pupal development. Required for proper development of the optic lobes and wings, and abdominal pigmentation. The polypeptide is Optomotor-blind protein (bi) (Drosophila melanogaster (Fruit fly)).